Here is a 122-residue protein sequence, read N- to C-terminus: Large ribosomal subunit protein uL14 (122 aa).

Belongs to the universal ribosomal protein uL14 family. Part of the 50S ribosomal subunit. Forms a cluster with proteins L3 and L19. In the 70S ribosome, L14 and L19 interact and together make contacts with the 16S rRNA in bridges B5 and B8.

Its function is as follows. Binds to 23S rRNA. Forms part of two intersubunit bridges in the 70S ribosome. In Mycobacterium ulcerans (strain Agy99), this protein is Large ribosomal subunit protein uL14.